Here is a 570-residue protein sequence, read N- to C-terminus: Proline--tRNA ligase (570 aa).

Belongs to the class-II aminoacyl-tRNA synthetase family. ProS type 1 subfamily. In terms of assembly, homodimer.

It localises to the cytoplasm. The catalysed reaction is tRNA(Pro) + L-proline + ATP = L-prolyl-tRNA(Pro) + AMP + diphosphate. In terms of biological role, catalyzes the attachment of proline to tRNA(Pro) in a two-step reaction: proline is first activated by ATP to form Pro-AMP and then transferred to the acceptor end of tRNA(Pro). As ProRS can inadvertently accommodate and process non-cognate amino acids such as alanine and cysteine, to avoid such errors it has two additional distinct editing activities against alanine. One activity is designated as 'pretransfer' editing and involves the tRNA(Pro)-independent hydrolysis of activated Ala-AMP. The other activity is designated 'posttransfer' editing and involves deacylation of mischarged Ala-tRNA(Pro). The misacylated Cys-tRNA(Pro) is not edited by ProRS. The sequence is that of Proline--tRNA ligase from Thermoanaerobacter sp. (strain X514).